The sequence spans 395 residues: Flavohemoprotein (395 aa).

Residues 1–136 (MLDQQTIATI…LANVFIQRES (136 aa)) form the Globin domain. Residue His85 coordinates heme b. Catalysis depends on charge relay system residues Tyr95 and Glu135. The segment at 147-395 (GGWHGIRPFR…YECFGPHKVI (249 aa)) is reductase. In terms of domain architecture, FAD-binding FR-type spans 150–255 (HGIRPFRIVA…AAPHGDFYLE (106 aa)). FAD-binding positions include Tyr188 and 204–207 (RQYS). Residue 268-273 (GVGQTP) participates in NADP(+) binding. 388–391 (CFGP) provides a ligand contact to FAD.

Belongs to the globin family. Two-domain flavohemoproteins subfamily. The protein in the C-terminal section; belongs to the flavoprotein pyridine nucleotide cytochrome reductase family. Requires heme b as cofactor. FAD is required as a cofactor.

Its subcellular location is the cytoplasm. The catalysed reaction is 2 nitric oxide + NADPH + 2 O2 = 2 nitrate + NADP(+) + H(+). The enzyme catalyses 2 nitric oxide + NADH + 2 O2 = 2 nitrate + NAD(+) + H(+). Its function is as follows. Is involved in NO detoxification in an aerobic process, termed nitric oxide dioxygenase (NOD) reaction that utilizes O(2) and NAD(P)H to convert NO to nitrate, which protects the bacterium from various noxious nitrogen compounds. Therefore, plays a central role in the inducible response to nitrosative stress. In Dickeya dadantii (strain 3937) (Erwinia chrysanthemi (strain 3937)), this protein is Flavohemoprotein (hmp).